A 468-amino-acid polypeptide reads, in one-letter code: Effector protein hopD2 (468 aa).

Residues 1-20 are compositionally biased toward polar residues; that stretch reads MNPLQPIQHSITNSQMSGGQ. The disordered stretch occupies residues 1-35; sequence MNPLQPIQHSITNSQMSGGQQLEAEGSQAHNSYSH. Positions 143 to 468 constitute a Tyrosine-protein phosphatase domain; the sequence is DASSPPSAND…TQWRAKIALE (326 aa). Cysteine 378 functions as the Phosphocysteine intermediate in the catalytic mechanism.

In terms of assembly, interacts with EFR and FLS2 (via the kinase and cytoplasmic domains).

The protein resides in the secreted. The enzyme catalyses O-phospho-L-tyrosyl-[protein] + H2O = L-tyrosyl-[protein] + phosphate. Its activity is regulated as follows. Inhibited by sodium orthovanadate. Effector showing tyrosine-phosphatase activity required for host defense suppression. Functions inside plant cells causing suppression of HR (hypersensitive response), PR1 gene expression and oxidative burst probably by interfering with a MAPK (mitogen-activated protein kinase) pathway. MAPK cascades are known to activate defense-related transcription factors. Inhibits plant pattern-recognition receptors (PRRs) activation. This chain is Effector protein hopD2 (hopD2), found in Pseudomonas syringae pv. tomato (strain ATCC BAA-871 / DC3000).